The following is a 190-amino-acid chain: Peptidyl-tRNA hydrolase (190 aa).

Tyr-18 contacts tRNA. Residue His-23 is the Proton acceptor of the active site. Residues Phe-65, Asn-67, and Asn-113 each coordinate tRNA.

Belongs to the PTH family. In terms of assembly, monomer.

Its subcellular location is the cytoplasm. It carries out the reaction an N-acyl-L-alpha-aminoacyl-tRNA + H2O = an N-acyl-L-amino acid + a tRNA + H(+). Its function is as follows. Hydrolyzes ribosome-free peptidyl-tRNAs (with 1 or more amino acids incorporated), which drop off the ribosome during protein synthesis, or as a result of ribosome stalling. Functionally, catalyzes the release of premature peptidyl moieties from peptidyl-tRNA molecules trapped in stalled 50S ribosomal subunits, and thus maintains levels of free tRNAs and 50S ribosomes. The sequence is that of Peptidyl-tRNA hydrolase from Akkermansia muciniphila (strain ATCC BAA-835 / DSM 22959 / JCM 33894 / BCRC 81048 / CCUG 64013 / CIP 107961 / Muc).